The following is a 663-amino-acid chain: UvrABC system protein B (663 aa).

Positions 1–10 (MIDKRDDKPF) are enriched in basic and acidic residues. The tract at residues 1 to 23 (MIDKRDDKPFKLKSKYKPSGDQP) is disordered. The Helicase ATP-binding domain maps to 31-418 (DNIEGGEKAQ…TNTIIEQIIR (388 aa)). 44–51 (GATGTGKT) serves as a coordination point for ATP. The Beta-hairpin motif lies at 97–120 (YYDYYQPEAYVPSSDTYIEKDSSV). The region spanning 435–601 (QMDDLLGEIN…TIKKDIRGLI (167 aa)) is the Helicase C-terminal domain. Residues 627–662 (KEAINALQKQMQEAAELLDFELAAQMRDLILELKLM) form the UVR domain.

It belongs to the UvrB family. Forms a heterotetramer with UvrA during the search for lesions. Interacts with UvrC in an incision complex.

It is found in the cytoplasm. The UvrABC repair system catalyzes the recognition and processing of DNA lesions. A damage recognition complex composed of 2 UvrA and 2 UvrB subunits scans DNA for abnormalities. Upon binding of the UvrA(2)B(2) complex to a putative damaged site, the DNA wraps around one UvrB monomer. DNA wrap is dependent on ATP binding by UvrB and probably causes local melting of the DNA helix, facilitating insertion of UvrB beta-hairpin between the DNA strands. Then UvrB probes one DNA strand for the presence of a lesion. If a lesion is found the UvrA subunits dissociate and the UvrB-DNA preincision complex is formed. This complex is subsequently bound by UvrC and the second UvrB is released. If no lesion is found, the DNA wraps around the other UvrB subunit that will check the other stand for damage. In Streptococcus pyogenes serotype M28 (strain MGAS6180), this protein is UvrABC system protein B.